The sequence spans 244 residues: tRNA pseudouridine synthase A (244 aa).

The active-site Nucleophile is the Asp52. Tyr110 lines the substrate pocket.

Belongs to the tRNA pseudouridine synthase TruA family. In terms of assembly, homodimer.

The enzyme catalyses uridine(38/39/40) in tRNA = pseudouridine(38/39/40) in tRNA. Its function is as follows. Formation of pseudouridine at positions 38, 39 and 40 in the anticodon stem and loop of transfer RNAs. This is tRNA pseudouridine synthase A from Geobacter sulfurreducens (strain ATCC 51573 / DSM 12127 / PCA).